The primary structure comprises 130 residues: MNFVFLWAALGGAIGSSLRYFVGKMMPSKFLMFESFPLGTFSVNIIGCFVIGFMGHLATKKVFGDDFGIFFVTGVLGGFTTFSSYGLDTLKLLQKSQYIEAISYVLGTNLLGLIGVAIGWFLAKNFVGVH.

The next 4 helical transmembrane spans lie at 3-23, 38-58, 67-87, and 102-122; these read FVFL…YFVG, LGTF…GHLA, FGIF…SYGL, and ISYV…GWFL. Residues glycine 77 and threonine 80 each contribute to the Na(+) site.

It belongs to the fluoride channel Fluc/FEX (TC 1.A.43) family.

The protein resides in the cell inner membrane. The enzyme catalyses fluoride(in) = fluoride(out). Na(+) is not transported, but it plays an essential structural role and its presence is essential for fluoride channel function. Functionally, fluoride-specific ion channel. Important for reducing fluoride concentration in the cell, thus reducing its toxicity. The polypeptide is Fluoride-specific ion channel FluC (Helicobacter pylori (strain G27)).